Consider the following 258-residue polypeptide: Ribosomal RNA large subunit methyltransferase E (258 aa).

Positions 58, 60, 78, 96, and 120 each coordinate S-adenosyl-L-methionine. Catalysis depends on Lys-160, which acts as the Proton acceptor.

It belongs to the class I-like SAM-binding methyltransferase superfamily. RNA methyltransferase RlmE family.

The protein localises to the cytoplasm. The catalysed reaction is uridine(2552) in 23S rRNA + S-adenosyl-L-methionine = 2'-O-methyluridine(2552) in 23S rRNA + S-adenosyl-L-homocysteine + H(+). Functionally, specifically methylates the uridine in position 2552 of 23S rRNA at the 2'-O position of the ribose in the fully assembled 50S ribosomal subunit. This is Ribosomal RNA large subunit methyltransferase E from Methanococcus maripaludis (strain C7 / ATCC BAA-1331).